The primary structure comprises 865 residues: cGMP-specific 3',5'-cyclic phosphodiesterase (865 aa).

Ser92 is subject to Phosphoserine. GAF domains lie at 154-304 (DVTA…GIVL) and 336-493 (SLEV…GLGI). The PDEase domain maps to 526–850 (ETRELQALSA…QKWQALAEQQ (325 aa)). The Proton donor role is filled by His603. Residues His607, His643, Asp644, and Asp754 each contribute to the Zn(2+) site. Asp644 lines the Mg(2+) pocket. Residue Gln807 coordinates 3',5'-cyclic GMP.

This sequence belongs to the cyclic nucleotide phosphodiesterase family. Zn(2+) serves as cofactor. Requires Mg(2+) as cofactor. Post-translationally, phosphorylation is regulated by binding of cGMP to the two allosteric sites. Phosphorylation by PRKG1 leads to its activation.

The catalysed reaction is 3',5'-cyclic GMP + H2O = GMP + H(+). The protein operates within purine metabolism; 3',5'-cyclic GMP degradation; GMP from 3',5'-cyclic GMP: step 1/1. In terms of biological role, plays a role in signal transduction by regulating the intracellular concentration of cyclic nucleotides. This phosphodiesterase catalyzes the specific hydrolysis of cGMP to 5'-GMP. Specifically regulates nitric-oxide-generated cGMP. This Mus musculus (Mouse) protein is cGMP-specific 3',5'-cyclic phosphodiesterase (Pde5a).